A 100-amino-acid polypeptide reads, in one-letter code: Small ribosomal subunit protein uS14c (100 aa).

Belongs to the universal ribosomal protein uS14 family. Part of the 30S ribosomal subunit.

The protein resides in the plastid. It localises to the chloroplast. Its function is as follows. Binds 16S rRNA, required for the assembly of 30S particles. This is Small ribosomal subunit protein uS14c from Rhodomonas salina (Cryptomonas salina).